The sequence spans 1374 residues: DNA-directed RNA polymerase subunit beta (1374 aa).

This sequence belongs to the RNA polymerase beta chain family. As to quaternary structure, the RNAP catalytic core consists of 2 alpha, 1 beta, 1 beta' and 1 omega subunit. When a sigma factor is associated with the core the holoenzyme is formed, which can initiate transcription.

The catalysed reaction is RNA(n) + a ribonucleoside 5'-triphosphate = RNA(n+1) + diphosphate. DNA-dependent RNA polymerase catalyzes the transcription of DNA into RNA using the four ribonucleoside triphosphates as substrates. This chain is DNA-directed RNA polymerase subunit beta, found in Methylobacterium nodulans (strain LMG 21967 / CNCM I-2342 / ORS 2060).